A 360-amino-acid chain; its full sequence is DNA polymerase IV (360 aa).

One can recognise a UmuC domain in the interval 9–191 (IMHLDIDAFY…LNINKIPYIG (183 aa)). Mg(2+) contacts are provided by aspartate 13 and aspartate 108. The active site involves glutamate 109.

The protein belongs to the DNA polymerase type-Y family. Monomer. The cofactor is Mg(2+).

It is found in the cytoplasm. The catalysed reaction is DNA(n) + a 2'-deoxyribonucleoside 5'-triphosphate = DNA(n+1) + diphosphate. Functionally, poorly processive, error-prone DNA polymerase involved in untargeted mutagenesis. Copies undamaged DNA at stalled replication forks, which arise in vivo from mismatched or misaligned primer ends. These misaligned primers can be extended by PolIV. Exhibits no 3'-5' exonuclease (proofreading) activity. May be involved in translesional synthesis, in conjunction with the beta clamp from PolIII. This chain is DNA polymerase IV, found in Ureaplasma parvum serovar 3 (strain ATCC 27815 / 27 / NCTC 11736).